The chain runs to 318 residues: Rhomboid-related protein 4 (318 aa).

The Cytoplasmic portion of the chain corresponds to 1-21; sequence MQRRSRGINTGLILLLSQIFH. The chain crosses the membrane as a helical span at residues 22 to 42; that stretch reads VGINNIPPVTLATLALNIWFF. Residues 43–106 are Extracellular-facing; it reads LNPQKPLYSS…RRLGSRWFAY (64 aa). A helical membrane pass occupies residues 107–127; it reads VITTFSVLTGVVYLLLQFAVA. At 128–137 the chain is on the cytoplasmic side; the sequence is EFMDEPDFKR. The chain crosses the membrane as a helical span at residues 138–154; the sequence is SCAVGFSGVLFALKVLN. The Nucleophile role is filled by Ser-144. Residues 155 to 179 are Extracellular-facing; sequence NHYCPGGFVNILGFPVPNRFACWVE. A helical transmembrane segment spans residues 180-204; that stretch reads LVAIHLFSPGTSFAGHQAGILVGLM. Residue His-195 is part of the active site. At 205–318 the chain is on the cytoplasmic side; that stretch reads YTQGPLKKIM…RQRLHRFDSQ (114 aa). Residues 271–286 are ubiquitin-binding domain (UBD); it reads SEEEQLERALQASLWD. The interval 285–318 is disordered; it reads WDRGHTRNSPPPYGFHLSPEEEMRRQRLHRFDSQ. A compositionally biased stretch (basic and acidic residues) spans 302 to 318; that stretch reads SPEEEMRRQRLHRFDSQ. The tract at residues 303-318 is VCP/p97-interacting motif (VIM); it reads PEEEMRRQRLHRFDSQ.

It belongs to the peptidase S54 family. As to quaternary structure, interacts with BIK and STEAP3. Interacts (via C-terminal domain) with VCP. Interacts with ubiquitin and ubiquitinated proteins.

It localises to the endoplasmic reticulum membrane. The protein localises to the mitochondrion membrane. It catalyses the reaction Cleaves type-1 transmembrane domains using a catalytic dyad composed of serine and histidine that are contributed by different transmembrane domains.. Its activity is regulated as follows. Inhibited by aprotinin. In terms of biological role, intramembrane-cleaving serine protease that cleaves single transmembrane or multi-pass membrane proteins in the hydrophobic plane of the membrane, luminal loops and juxtamembrane regions. Involved in regulated intramembrane proteolysis and the subsequent release of functional polypeptides from their membrane anchors. Functional component of endoplasmic reticulum-associated degradation (ERAD) for misfolded membrane proteins. Required for the degradation process of some specific misfolded endoplasmic reticulum (ER) luminal proteins. Participates in the transfer of misfolded proteins from the ER to the cytosol, where they are destroyed by the proteasome in a ubiquitin-dependent manner. Functions in BIK, MPZ, PKD1, PTCRA, RHO, STEAP3 and TRAC processing. Involved in the regulation of exosomal secretion; inhibits the TSAP6-mediated secretion pathway. Involved in the regulation of apoptosis; modulates BIK-mediated apoptotic activity. Also plays a role in the regulation of spermatogenesis; inhibits apoptotic activity in spermatogonia. This is Rhomboid-related protein 4 (RHBDD1) from Pongo abelii (Sumatran orangutan).